The primary structure comprises 1035 residues: Valine--tRNA ligase (1035 aa).

The short motif at Pro-45–His-55 is the 'HIGH' region element. Positions Glu-253–Leu-281 form a coiled coil. An ATP-binding site is contributed by Lys-619. Residues Asp-967–Lys-1035 adopt a coiled-coil conformation.

This sequence belongs to the class-I aminoacyl-tRNA synthetase family. ValS type 1 subfamily. Monomer.

Its subcellular location is the cytoplasm. The enzyme catalyses tRNA(Val) + L-valine + ATP = L-valyl-tRNA(Val) + AMP + diphosphate. Its function is as follows. Catalyzes the attachment of valine to tRNA(Val). As ValRS can inadvertently accommodate and process structurally similar amino acids such as threonine, to avoid such errors, it has a 'posttransfer' editing activity that hydrolyzes mischarged Thr-tRNA(Val) in a tRNA-dependent manner. The protein is Valine--tRNA ligase of Rhodopirellula baltica (strain DSM 10527 / NCIMB 13988 / SH1).